A 151-amino-acid polypeptide reads, in one-letter code: Nucleoside diphosphate kinase (151 aa).

6 residues coordinate ATP: Lys-11, Phe-59, Arg-87, Thr-93, Arg-104, and Asn-114. Catalysis depends on His-117, which acts as the Pros-phosphohistidine intermediate.

The protein belongs to the NDK family. Homotetramer. It depends on Mg(2+) as a cofactor.

Its subcellular location is the cytoplasm. The enzyme catalyses a 2'-deoxyribonucleoside 5'-diphosphate + ATP = a 2'-deoxyribonucleoside 5'-triphosphate + ADP. The catalysed reaction is a ribonucleoside 5'-diphosphate + ATP = a ribonucleoside 5'-triphosphate + ADP. Major role in the synthesis of nucleoside triphosphates other than ATP. The ATP gamma phosphate is transferred to the NDP beta phosphate via a ping-pong mechanism, using a phosphorylated active-site intermediate. This chain is Nucleoside diphosphate kinase, found in Prochlorococcus marinus (strain NATL2A).